The chain runs to 457 residues: COBRA-like protein 3 (457 aa).

The signal sequence occupies residues 1-35 (MAVGGAGSSRSVAPCCCCAVLLAAALLFSAPATTE). N-linked (GlcNAc...) asparagine glycans are attached at residues Asn45, Asn170, Asn178, Asn217, Asn242, Asn258, Asn326, Asn341, and Asn361. Asn430 carries the GPI-anchor amidated asparagine lipid modification. The propeptide at 431–457 (ASPLTKQPLTLSVLVFSIVLATLLAYA) is removed in mature form. The helical transmembrane segment at 437 to 457 (QPLTLSVLVFSIVLATLLAYA) threads the bilayer.

The protein belongs to the COBRA family.

The protein resides in the cell membrane. Its function is as follows. Involved in determining the orientation of cell expansion, probably by playing an important role in cellulose deposition. May act by recruiting cellulose synthesizing complexes to discrete positions on the cell surface. The protein is COBRA-like protein 3 (BC1L4) of Oryza sativa subsp. japonica (Rice).